A 151-amino-acid polypeptide reads, in one-letter code: Large ribosomal subunit protein bL9 (151 aa).

This sequence belongs to the bacterial ribosomal protein bL9 family.

In terms of biological role, binds to the 23S rRNA. The protein is Large ribosomal subunit protein bL9 of Prochlorococcus marinus (strain AS9601).